Consider the following 521-residue polypeptide: Maturase K (521 aa).

This sequence belongs to the intron maturase 2 family. MatK subfamily.

The protein localises to the plastid. Functionally, usually encoded in the trnK tRNA gene intron. Probably assists in splicing its own and other chloroplast group II introns. The chain is Maturase K from Cuscuta exaltata (Tall dodder).